The sequence spans 249 residues: Eukaryotic translation initiation factor 6 (249 aa).

The protein belongs to the eIF-6 family. In terms of assembly, monomer. Associates with the 60S ribosomal subunit.

Its subcellular location is the cytoplasm. The protein localises to the nucleus. It localises to the nucleolus. Binds to the 60S ribosomal subunit and prevents its association with the 40S ribosomal subunit to form the 80S initiation complex in the cytoplasm. May also be involved in ribosome biogenesis. The polypeptide is Eukaryotic translation initiation factor 6 (Babesia bovis).